The chain runs to 255 residues: 1-(5-phosphoribosyl)-5-[(5-phosphoribosylamino)methylideneamino] imidazole-4-carboxamide isomerase (255 aa).

The Proton acceptor role is filled by D8. D129 serves as the catalytic Proton donor.

Belongs to the HisA/HisF family.

The protein resides in the cytoplasm. It catalyses the reaction 1-(5-phospho-beta-D-ribosyl)-5-[(5-phospho-beta-D-ribosylamino)methylideneamino]imidazole-4-carboxamide = 5-[(5-phospho-1-deoxy-D-ribulos-1-ylimino)methylamino]-1-(5-phospho-beta-D-ribosyl)imidazole-4-carboxamide. The protein operates within amino-acid biosynthesis; L-histidine biosynthesis; L-histidine from 5-phospho-alpha-D-ribose 1-diphosphate: step 4/9. This Prochlorococcus marinus (strain MIT 9303) protein is 1-(5-phosphoribosyl)-5-[(5-phosphoribosylamino)methylideneamino] imidazole-4-carboxamide isomerase.